The following is a 122-amino-acid chain: Large ribosomal subunit protein uL14 (122 aa).

Belongs to the universal ribosomal protein uL14 family. Part of the 50S ribosomal subunit. Forms a cluster with proteins L3 and L19. In the 70S ribosome, L14 and L19 interact and together make contacts with the 16S rRNA in bridges B5 and B8.

In terms of biological role, binds to 23S rRNA. Forms part of two intersubunit bridges in the 70S ribosome. The protein is Large ribosomal subunit protein uL14 of Chlorobium phaeobacteroides (strain BS1).